The sequence spans 398 residues: Acetate kinase 1 (398 aa).

Asn-9 contacts Mg(2+). An ATP-binding site is contributed by Lys-16. Arg-89 lines the substrate pocket. The active-site Proton donor/acceptor is Asp-146. ATP-binding positions include 206-210 (HLGNG), 281-283 (DCR), and 329-333 (GIGEN). Glu-384 is a Mg(2+) binding site.

Belongs to the acetokinase family. In terms of assembly, homodimer. The cofactor is Mg(2+). Requires Mn(2+) as cofactor.

It localises to the cytoplasm. It catalyses the reaction acetate + ATP = acetyl phosphate + ADP. Its pathway is metabolic intermediate biosynthesis; acetyl-CoA biosynthesis; acetyl-CoA from acetate: step 1/2. Catalyzes the formation of acetyl phosphate from acetate and ATP. Can also catalyze the reverse reaction. The polypeptide is Acetate kinase 1 (Vibrio cholerae serotype O1 (strain ATCC 39315 / El Tor Inaba N16961)).